The sequence spans 357 residues: Carbamoyl phosphate synthase small chain (357 aa).

The segment at 1–168 (MSKRLLILED…STTTAYPSPN (168 aa)) is CPSase. L-glutamine is bound by residues Ser46, Gly220, and Gly222. A Glutamine amidotransferase type-1 domain is found at 172–357 (KVVVVDFGLK…FMDLMDNFKK (186 aa)). Cys247 serves as the catalytic Nucleophile. Leu248, Gln251, Asn289, Gly291, and Tyr292 together coordinate L-glutamine. Active-site residues include His331 and Asp333.

It belongs to the CarA family. As to quaternary structure, composed of two chains; the small (or glutamine) chain promotes the hydrolysis of glutamine to ammonia, which is used by the large (or ammonia) chain to synthesize carbamoyl phosphate. Tetramer of heterodimers (alpha,beta)4.

The catalysed reaction is hydrogencarbonate + L-glutamine + 2 ATP + H2O = carbamoyl phosphate + L-glutamate + 2 ADP + phosphate + 2 H(+). It carries out the reaction L-glutamine + H2O = L-glutamate + NH4(+). The protein operates within amino-acid biosynthesis; L-arginine biosynthesis; carbamoyl phosphate from bicarbonate: step 1/1. It participates in pyrimidine metabolism; UMP biosynthesis via de novo pathway; (S)-dihydroorotate from bicarbonate: step 1/3. In terms of biological role, small subunit of the glutamine-dependent carbamoyl phosphate synthetase (CPSase). CPSase catalyzes the formation of carbamoyl phosphate from the ammonia moiety of glutamine, carbonate, and phosphate donated by ATP, constituting the first step of 2 biosynthetic pathways, one leading to arginine and/or urea and the other to pyrimidine nucleotides. The small subunit (glutamine amidotransferase) binds and cleaves glutamine to supply the large subunit with the substrate ammonia. The sequence is that of Carbamoyl phosphate synthase small chain from Lactococcus lactis subsp. lactis (strain IL1403) (Streptococcus lactis).